We begin with the raw amino-acid sequence, 62 residues long: Large ribosomal subunit protein uL30 (62 aa).

Belongs to the universal ribosomal protein uL30 family. Part of the 50S ribosomal subunit.

The protein is Large ribosomal subunit protein uL30 of Polynucleobacter asymbioticus (strain DSM 18221 / CIP 109841 / QLW-P1DMWA-1) (Polynucleobacter necessarius subsp. asymbioticus).